The sequence spans 312 residues: Olfactory receptor 51B5 (312 aa).

The Extracellular portion of the chain corresponds to methionine 1–histidine 23. The helical transmembrane segment at tryptophan 24–leucine 44 threads the bilayer. At leucine 45–asparagine 52 the chain is on the cytoplasmic side. Residues leucine 53–leucine 73 form a helical membrane-spanning segment. Residues threonine 74–serine 97 lie on the Extracellular side of the membrane. Cysteine 95 and cysteine 187 are joined by a disulfide. Residues glutamine 98–tyrosine 118 traverse the membrane as a helical segment. Residues aspartate 119–threonine 137 lie on the Cytoplasmic side of the membrane. The chain crosses the membrane as a helical span at residues arginine 138–isoleucine 158. Over arginine 159 to arginine 194 the chain is Extracellular. The helical transmembrane segment at leucine 195–serine 215 threads the bilayer. Residues tyrosine 216–alanine 235 are Cytoplasmic-facing. The chain crosses the membrane as a helical span at residues leucine 236–leucine 256. Over serine 257–histidine 271 the chain is Extracellular. A helical membrane pass occupies residues leucine 272–valine 292. Residues lysine 293–threonine 312 are Cytoplasmic-facing.

The protein belongs to the G-protein coupled receptor 1 family.

The protein resides in the cell membrane. Functionally, odorant receptor. The sequence is that of Olfactory receptor 51B5 (OR51B5) from Homo sapiens (Human).